A 604-amino-acid polypeptide reads, in one-letter code: ATP-dependent RNA helicase DBP1 (604 aa).

Positions 1 to 79 (MSDGSGRYVP…RASGSGGFGG (79 aa)) are disordered. Positions 32–45 (SRYSGNGFFSSPNR) are enriched in polar residues. The Q motif signature appears at 138–166 (TEFKSPPLDELLLENVELANFSKPTPVQK). Positions 169 to 358 (IPIVTKNRDL…RDFLKDYIFL (190 aa)) constitute a Helicase ATP-binding domain. 182–189 (AQTGSGKT) contributes to the ATP binding site. Positions 302–305 (DEAD) match the DEAD box motif. Residues 386–529 (LLDILINEID…EVPQFLVNMV (144 aa)) enclose the Helicase C-terminal domain. The disordered stretch occupies residues 535 to 591 (FGRGGRNSRTGSNRGRGSNTRDYRHSNKDDWGSLGSSRRGFRSNDNRGFGNNWGSSS). Residues 541-552 (NSRTGSNRGRGS) show a composition bias toward low complexity. Residues 553–565 (NTRDYRHSNKDDW) show a composition bias toward basic and acidic residues.

This sequence belongs to the DEAD box helicase family. DDX3/DED1 subfamily.

It localises to the cytoplasm. It catalyses the reaction ATP + H2O = ADP + phosphate + H(+). ATP-binding RNA helicase involved in translation initiation. Remodels RNA in response to ADP and ATP concentrations by facilitating disruption, but also formation of RNA duplexes. Redundant to DED1, may be required in conditions in which DED1 expression is decreased. The chain is ATP-dependent RNA helicase DBP1 (DBP1) from Candida glabrata (strain ATCC 2001 / BCRC 20586 / JCM 3761 / NBRC 0622 / NRRL Y-65 / CBS 138) (Yeast).